The chain runs to 201 residues: MQQHKQLVVILETAIIAAFAMALTYIPHTTGVSAIELNYGLIPIAVLAMRRGLVPAAWAGFVWGILDLILRGIGGGSVLNPLQGILEYPIAFTLVGLMGLTFASFQKAVRGSEKVKASGYAFAGIIIGTFAKYFIHFIAGVVFWGAYAPKGTNVWVYSLIVNGGSALFSTVLTIVVVGVLLTVAPQLFVAKDGKSFSTKAA.

6 consecutive transmembrane segments (helical) span residues L7–P27, T29–M49, L53–I73, I85–F105, G124–W144, and T170–A190.

The protein belongs to the vitamin uptake transporter (VUT/ECF) (TC 2.A.88) family. Thiamine transporter subfamily. In Lactococcus lactis subsp. cremoris (strain NZ9000) forms a stable energy-coupling factor (ECF) transporter complex probably composed of a membrane-embedded substrate-binding protein (S component), two ATP-binding proteins (A components) and a transmembrane protein (T component).

It is found in the cell membrane. In terms of biological role, thiamine-binding protein that interacts with the energy-coupling factor (ECF) ABC-transporter complex. Unlike classic ABC transporters this ECF transporter provides the energy necessary to transport a number of different substrates. The substrates themselves are bound by transmembrane, not extracytoplasmic soluble proteins and transport it into cells. Binds thiamine with a dissociation constant of 0.5 nM. Upon coexpression with its energy-coupling factor (ECF) ABC-transporter complex EcfA1A2T in Lactococcus lactis subsp. cremoris (strain NZ9000) allows thiamine uptake; uptake requires both ThiT and EcfA1A2T. This chain is Thiamine transporter ThiT (thiT), found in Lacticaseibacillus paracasei (strain ATCC 334 / BCRC 17002 / CCUG 31169 / CIP 107868 / KCTC 3260 / NRRL B-441) (Lactobacillus paracasei).